We begin with the raw amino-acid sequence, 462 residues long: Metal cation symporter ZIP8 (462 aa).

The signal sequence occupies residues Met-1–Gly-19. At Arg-20–Gly-132 the chain is on the extracellular side. N-linked (GlcNAc...) asparagine glycans are attached at residues Asn-40, Asn-88, and Asn-96. The chain crosses the membrane as a helical span at residues Phe-133–Ile-153. Residues Lys-154–Lys-160 lie on the Cytoplasmic side of the membrane. A helical transmembrane segment spans residues Ile-161–Leu-181. The Extracellular segment spans residues Ile-182–Lys-191. A helical transmembrane segment spans residues Ile-192–Val-212. Topologically, residues Glu-213 to Ala-367 are cytoplasmic. The short motif at Glu-345–Glu-350 is the XEXPHE-motif element. Residues Leu-368 to Val-388 traverse the membrane as a helical segment. Residues Gly-389–Asn-390 are Extracellular-facing. Residues Asn-391 to Ala-411 form a helical membrane-spanning segment. Residues Asp-412–Asp-431 are Cytoplasmic-facing. A helical membrane pass occupies residues Phe-432 to Ile-452. The Extracellular segment spans residues Thr-453–Gln-462.

It belongs to the ZIP transporter (TC 2.A.5) family. As to quaternary structure, homodimer. N-glycosylated. N-glycosylation is not required for proper iron and zinc transport.

Its subcellular location is the cell membrane. It localises to the lysosome membrane. It is found in the apical cell membrane. The protein resides in the basolateral cell membrane. The catalysed reaction is Zn(2+)(out) + 2 hydrogencarbonate(out) = Zn(2+)(in) + 2 hydrogencarbonate(in). The enzyme catalyses selenite(out) + Zn(2+)(out) + hydrogencarbonate(out) = selenite(in) + Zn(2+)(in) + hydrogencarbonate(in). It carries out the reaction Mn(2+)(out) + 2 hydrogencarbonate(out) = Mn(2+)(in) + 2 hydrogencarbonate(in). It catalyses the reaction Fe(2+)(out) + 2 hydrogencarbonate(out) = Fe(2+)(in) + 2 hydrogencarbonate(in). The catalysed reaction is Cd(2+)(out) + 2 hydrogencarbonate(out) = Cd(2+)(in) + 2 hydrogencarbonate(in). The enzyme catalyses Co(2+)(out) + 2 hydrogencarbonate(out) = Co(2+)(in) + 2 hydrogencarbonate(in). Electroneutral divalent metal cation:bicarbonate symporter of the plasma membrane mediating the cellular uptake of zinc and manganese, two divalent metal cations important for development, tissue homeostasis and immunity. Transports an electroneutral complex composed of a divalent metal cation and two bicarbonate anions or alternatively a bicarbonate and a selenite anion. Thereby, it also contributes to the cellular uptake of selenium, an essential trace metal and micronutrient. Also imports cadmium a non-essential metal which is cytotoxic and carcinogenic. May also transport iron and cobalt through membranes. Through zinc import, indirectly regulates the metal-dependent transcription factor MTF1 and the expression of some metalloproteases involved in cartilage catabolism and also probably heart development. Also indirectly regulates the expression of proteins involved in cell morphology and cytoskeleton organization. Indirectly controls innate immune function and inflammatory response by regulating zinc cellular uptake which in turn modulates the expression of genes specific of these processes. Protects, for instance, cells from injury and death at the onset of inflammation. By regulating zinc influx into monocytes also directly modulates their adhesion to endothelial cells and arteries. Reclaims manganese from the bile at the apical membrane of hepatocytes, thereby regulating the activity of the manganese-dependent enzymes through the systemic levels of the nutrient. Also participates in manganese reabsorption in the proximal tubule of the kidney. By mediating the extracellular uptake of manganese by cells of the blood-brain barrier, may also play a role in the transport of the micronutrient to the brain. With manganese cellular uptake also participates in mitochondrial proper function. Finally, also probably functions intracellularly, translocating zinc from lysosome to cytosol to indirectly enhance the expression of specific genes during TCR-mediated T cell activation. The chain is Metal cation symporter ZIP8 from Rattus norvegicus (Rat).